A 691-amino-acid chain; its full sequence is Lacticin-481/lactococcin-DR transport/processing ATP-binding protein lcnDR3 (691 aa).

In terms of domain architecture, Peptidase C39 spans 6 to 130 (QNNEQDCLLA…KKFSGYIITL (125 aa)). Cys-12 is an active-site residue. Residues 158-434 (TFLYIFSLFI…IQDVMFEISR (277 aa)) enclose the ABC transmembrane type-1 domain. Transmembrane regions (helical) follow at residues 159–179 (FLYIFSLFISQIVALWFSIIL), 189–209 (ITYSFIMMISLVLFQTLSLLM), 262–284 (GILLKIFPSLLNFFTVFIVIIYL), 289–311 (FTLTLFLVIMNLLYMIFSFSLIS), and 385–405 (ICVILMMIFGIYLNQGNLVSI). Positions 464-689 (IILKDISYSY…LLNDSYNSFV (226 aa)) constitute an ABC transporter domain. 497–504 (GKSGSGKS) provides a ligand contact to ATP.

This sequence belongs to the ABC transporter superfamily.

Its subcellular location is the cell membrane. Its function is as follows. Probably implicated in the export process of the lantibiotic lacticin-481/lactococcin-DR. The protein is Lacticin-481/lactococcin-DR transport/processing ATP-binding protein lcnDR3 (lcnDR3) of Lactococcus lactis subsp. lactis (Streptococcus lactis).